Here is a 261-residue protein sequence, read N- to C-terminus: Lys-63-specific deubiquitinase BRCC36 (261 aa).

The MPN domain maps to 6-149 (VHIQGDAFLV…YTCFQSVQAQ (144 aa)). The Zn(2+) site is built by H92, H94, and D105. Positions 92 to 105 (HSHPHITVWPSHVD) match the JAMM motif motif.

Belongs to the peptidase M67A family. BRCC36 subfamily. As to quaternary structure, component of the BRCA1-A complex, at least composed of brca1, bard1, uimc1/rap80, abraxas1, brcc3/brcc36, babam2 and babam1/nba1. In the BRCA1-A complex, interacts directly with ABRAXAS1 and babam2. Component of the BRISC complex, at least composed of ABRAXAS2, brcc3/brcc36, babam2 and babam1/nba1. Within the complex, interacts directly with abraxas2. Both the BRCA1-A complex and the BRISC complex bind polyubiquitin. It depends on Zn(2+) as a cofactor.

The protein resides in the nucleus. Its subcellular location is the cytoplasm. It localises to the cytoskeleton. It is found in the spindle pole. Metalloprotease that specifically cleaves 'Lys-63'-linked polyubiquitin chains. Does not have activity toward 'Lys-48'-linked polyubiquitin chains. Component of the BRCA1-A complex, a complex that specifically recognizes 'Lys-63'-linked ubiquitinated histones H2A and H2AX at DNA lesions sites, leading to target the brca1-bard1 heterodimer to sites of DNA damage at double-strand breaks (DSBs). In the BRCA1-A complex, it specifically removes 'Lys-63'-linked ubiquitin on histones H2A and H2AX, antagonizing the rnf8-dependent ubiquitination at double-strand breaks (DSBs). Catalytic subunit of the BRISC complex, a multiprotein complex that specifically cleaves 'Lys-63'-linked ubiquitin in various substrates. Mediates the specific 'Lys-63'-specific deubiquitination associated with the COP9 signalosome complex (CSN), via the interaction of the BRISC complex with the CSN complex. The BRISC complex is required for normal mitotic spindle assembly and microtubule attachment to kinetochores via its role in deubiquitinating numa1. Plays a role in interferon signaling via its role in the deubiquitination of the interferon receptor ifnar1; deubiquitination increases ifnar1 activity by enhancing its stability and cell surface expression. Acts as a regulator of the NLRP3 inflammasome by mediating deubiquitination of nlrp3. Down-regulates the response to bacterial lipopolysaccharide (LPS) via its role in ifnar1 deubiquitination. In Xenopus laevis (African clawed frog), this protein is Lys-63-specific deubiquitinase BRCC36 (brcc3).